The chain runs to 480 residues: Endothelial transcription factor GATA-2 (480 aa).

Ser73 is modified (phosphoserine). Asymmetric dimethylarginine is present on Arg86. Residues 119-209 (SPFSKTPLHP…GSAARGEDKD (91 aa)) form a disordered region. Residues 143 to 153 (GAGGGSGGGSG) show a composition bias toward gly residues. The segment covering 185 to 203 (PSTTGAASPASSSAGGSAA) has biased composition (low complexity). Phosphoserine is present on Ser192. GATA-type zinc fingers lie at residues 295–319 (CVNCGATATPLWRRDGTGHYLCNAC) and 349–373 (CANCQTTTTTLWRRNANGDPVCNAC). Lys389 is covalently cross-linked (Glycyl lysine isopeptide (Lys-Gly) (interchain with G-Cter in SUMO2)). Residues 448-480 (HSGHILPTPTPIHPSSSLSFGHPHPSSMVTAMG) form a disordered region.

As to quaternary structure, interacts with BRD3. Interacts with AR and CCAR1. Interacts with MDFIC. As to expression, endothelial cells.

The protein resides in the nucleus. Transcriptional activator which regulates endothelin-1 gene expression in endothelial cells. Binds to the consensus sequence 5'-AGATAG-3'. This chain is Endothelial transcription factor GATA-2 (GATA2), found in Homo sapiens (Human).